The chain runs to 159 residues: Small ribosomal subunit protein uS17y (159 aa).

It belongs to the universal ribosomal protein uS17 family.

The protein resides in the cytoplasm. The polypeptide is Small ribosomal subunit protein uS17y (RPS11B) (Arabidopsis thaliana (Mouse-ear cress)).